The chain runs to 67 residues: MRIEQINARALEKVNYDRYLLSQAIAKRVNELINGAKPLIELPKPNMQLTEIATLEIAEGLVKVKEV.

It belongs to the RNA polymerase subunit omega family. As to quaternary structure, the RNAP catalytic core consists of 2 alpha, 1 beta, 1 beta' and 1 omega subunit. When a sigma factor is associated with the core the holoenzyme is formed, which can initiate transcription.

It catalyses the reaction RNA(n) + a ribonucleoside 5'-triphosphate = RNA(n+1) + diphosphate. In terms of biological role, promotes RNA polymerase assembly. Latches the N- and C-terminal regions of the beta' subunit thereby facilitating its interaction with the beta and alpha subunits. The chain is DNA-directed RNA polymerase subunit omega from Nautilia profundicola (strain ATCC BAA-1463 / DSM 18972 / AmH).